The chain runs to 852 residues: Chitin synthase 1 (852 aa).

Disordered regions lie at residues 27-46 (EDQDDMLPSTSAAAGETNYA) and 53-97 (SSLR…QANG). The segment covering 53–74 (SSLRSQKSANKPTTAQNRNSAA) has biased composition (polar residues). 7 helical membrane passes run 492–509 (RWLNGSFFAGVYGLIHFR), 532–552 (VISLVFSWFSVGNFYIAFYFI), 572–592 (IFDFCKYAYAFLLFVIFICSM), 601–621 (FLFMACLVGFAIIMCYMLFCS), 686–706 (FLPYLLLLPGYINILNIYAFC), 787–807 (THLVLAWIACNALLVVFITTS), and 830–850 (CGLGIFRFLGSIMFLLLGIFT).

This sequence belongs to the chitin synthase family. Class II subfamily.

Its subcellular location is the cell membrane. The enzyme catalyses [(1-&gt;4)-N-acetyl-beta-D-glucosaminyl](n) + UDP-N-acetyl-alpha-D-glucosamine = [(1-&gt;4)-N-acetyl-beta-D-glucosaminyl](n+1) + UDP + H(+). Its function is as follows. Polymerizes chitin, a structural polymer of the cell wall and septum, by transferring the sugar moiety of UDP-GlcNAc to the non-reducing end of the growing chitin polymer. This is Chitin synthase 1 (CHS1) from Mucor circinelloides f. lusitanicus (Mucor racemosus var. lusitanicus).